Consider the following 217-residue polypeptide: Large ribosomal subunit protein bL25 (217 aa).

Residues 178-217 (VVAPTEEPTEEEIEAMEGEQQTEEPEVVGESKEDEEKTEE) form a disordered region. The segment covering 184–205 (EPTEEEIEAMEGEQQTEEPEVV) has biased composition (acidic residues). Basic and acidic residues predominate over residues 206 to 217 (GESKEDEEKTEE).

It belongs to the bacterial ribosomal protein bL25 family. CTC subfamily. Part of the 50S ribosomal subunit; part of the 5S rRNA/L5/L18/L25 subcomplex. Contacts the 5S rRNA. Binds to the 5S rRNA independently of L5 and L18.

Functionally, this is one of the proteins that binds to the 5S RNA in the ribosome where it forms part of the central protuberance. In Staphylococcus aureus (strain MRSA252), this protein is Large ribosomal subunit protein bL25.